The primary structure comprises 930 residues: Carnosine synthase 1 (930 aa).

The tract at residues 1–24 (MISVDRLSEEQALGMKEQEWAGPE) is disordered. In terms of domain architecture, ATP-grasp spans 624 to 825 (RPPPAAFSVP…LLLAAVLLAL (202 aa)). 650 to 716 (VPFPAVAKLE…MEYVPGTEHD (67 aa)) provides a ligand contact to ATP. Residues glutamate 782, glutamate 794, and asparagine 796 each coordinate Mg(2+). 3 residues coordinate Mn(2+): glutamate 782, glutamate 794, and asparagine 796.

As to quaternary structure, homotetramer. Mg(2+) serves as cofactor. It depends on Mn(2+) as a cofactor.

It catalyses the reaction beta-alanine + L-histidine + ATP = carnosine + ADP + phosphate + H(+). The enzyme catalyses 4-aminobutanoate + L-histidine + ATP = L-homocarnosine + ADP + phosphate + H(+). Functionally, catalyzes the synthesis of carnosine and homocarnosine. Carnosine is synthesized more efficiently than homocarnosine. This chain is Carnosine synthase 1, found in Gallus gallus (Chicken).